A 460-amino-acid polypeptide reads, in one-letter code: Proline--tRNA ligase (460 aa).

The protein belongs to the class-II aminoacyl-tRNA synthetase family. ProS type 3 subfamily. Homodimer.

It is found in the cytoplasm. It catalyses the reaction tRNA(Pro) + L-proline + ATP = L-prolyl-tRNA(Pro) + AMP + diphosphate. In terms of biological role, catalyzes the attachment of proline to tRNA(Pro) in a two-step reaction: proline is first activated by ATP to form Pro-AMP and then transferred to the acceptor end of tRNA(Pro). The polypeptide is Proline--tRNA ligase (Methanococcus maripaludis (strain C6 / ATCC BAA-1332)).